The sequence spans 299 residues: Cancer/testis antigen family 47 member B1 (299 aa).

Positions 1–10 are enriched in basic and acidic residues; that stretch reads MSATGDRHPT. Disordered regions lie at residues 1 to 102 and 215 to 299; these read MSAT…EGNE and AREP…SKGT. Composition is skewed to low complexity over residues 20-31 and 46-60; these read QEGAQAEAAGAG and VPAA…PVEG. A compositionally biased stretch (acidic residues) spans 81 to 101; that stretch reads AEEDSDIGPATEEEEEEEEGN. The span at 215 to 238 shows a compositional bias: basic and acidic residues; the sequence is AREPAEEAADEKPPEEAAEEKLTE. Composition is skewed to acidic residues over residues 239–251 and 268–281; these read EATE…EPTS and WDEE…EEEK. A coiled-coil region spans residues 270-298; it reads EEAQDAAGEEEKEQEKEKDVENKVKNSKG. Residues 282–293 show a composition bias toward basic and acidic residues; the sequence is EQEKEKDVENKV.

Belongs to the CT47 family.

The chain is Cancer/testis antigen family 47 member B1 from Homo sapiens (Human).